Here is a 394-residue protein sequence, read N- to C-terminus: Protein TsgA homolog (394 aa).

The next 12 membrane-spanning stretches (helical) occupy residues 11-31 (WISF…GMVM), 51-71 (FLNT…EIIP), 76-96 (LVFG…GHNL), 101-121 (ACMF…TFLI), 134-154 (LLFT…IAAT), 160-180 (VAWY…FILT), 206-226 (IGVL…LGFI), 246-266 (GLVS…SVAL), 274-294 (IVTV…SSQQ), 297-317 (MLSM…TTLI), 334-354 (FILT…GPIV), and 363-383 (LATA…LGFV).

The protein belongs to the major facilitator superfamily. TsgA family.

It is found in the cell inner membrane. This Edwardsiella ictaluri (strain 93-146) protein is Protein TsgA homolog.